Consider the following 218-residue polypeptide: MNTVLSPIEARIIGCLIEKEVTTPDHYPLTLNSLTTACNQKSNREPVLSLSESDVLDAVDGLIGRRMVSDESSFNSRVNKYQHRFCNTEFGDLQFTEQERAIICCMLLRGAQTPGELRTRTGRLANFSDVKEVESILEKLVAREAGALVVKLPREAGKRESRYQHLLSGEVDIEAFATASVSAVSSSASSEKFEELESEVASLREEVAELKALVESLL.

Belongs to the UPF0502 family.

The chain is UPF0502 protein VS_II0353 from Vibrio atlanticus (strain LGP32) (Vibrio splendidus (strain Mel32)).